The chain runs to 972 residues: Structural polyprotein (972 aa).

D26 contacts a divalent metal cation. Positions S509–A734 constitute a Peptidase S50 domain. Catalysis depends on S633, which acts as the Nucleophile. Residue K674 is part of the active site. 2 disordered regions span residues S797–A817 and G917–V972. Residues K801 to A817 show a composition bias toward basic and acidic residues.

Homotrimer. A central divalent metal (possibly cobalt) stabilizes the VP2 trimer. As to quaternary structure, homodimer. interacts (via C-terminus) with VP1 in the cytoplasm. Interacts with VP2. In terms of processing, specific enzymatic cleavages yield mature proteins. Capsid assembly seems to be regulated by polyprotein processing. The protease VP4 cleaves itself off the polyprotein, thus releasing pre-VP2 and VP3 within the infected cell. During capsid assembly, the C-terminus of pre-VP2 is further processed by VP4, giving rise to VP2, the external capsid protein and three small peptides that all stay closely associated with the capsid.

The protein resides in the virion. The protein localises to the host cytoplasm. Functionally, capsid protein VP2 self assembles to form an icosahedral capsid with a T=13 symmetry, about 70 nm in diameter, and consisting of 260 VP2 trimers. The capsid encapsulates the genomic dsRNA. VP2 is also involved in attachment and entry into the host cell. In terms of biological role, the precursor of VP2 plays an important role in capsid assembly. First, pre-VP2 and VP2 oligomers assemble to form a procapsid. Then, the pre-VP2 intermediates may be processed into VP2 proteins by proteolytic cleavage mediated by VP4 to obtain the mature virion. The final capsid is composed of pentamers and hexamers but VP2 has a natural tendency to assemble into all-pentameric structures. Therefore pre-VP2 may be required to allow formation of the hexameric structures. Its function is as follows. Protease VP4 is a serine protease that cleaves the polyprotein into its final products. Pre-VP2 is first partially cleaved, and may be completely processed by VP4 upon capsid maturation. Capsid protein VP3 plays a key role in virion assembly by providing a scaffold for the capsid composed of VP2. May self-assemble to form a T=4-like icosahedral inner-capsid composed of at least 180 trimers. Plays a role in genomic RNA packaging by recruiting VP1 into the capsid and interacting with the dsRNA genome segments to form a ribonucleoprotein complex. Additionally, the interaction of the VP3 C-terminal tail with VP1 removes the inherent structural blockade of the polymerase active site. Thus, VP3 can also function as a transcriptional activator. Functionally, structural peptide 1 is a small peptide derived from the C-terminus of pre-VP2. It destabilizes and perforates cell membranes, suggesting a role during viral entry. In terms of biological role, structural peptide 2 is a small peptide derived from the C-terminus of pre-VP2. It is not essential for virus viability, but viral growth is affected when this protein is absent. Its function is as follows. Structural peptide 3 is a small peptide derived from pre-VP2 C-terminus. It is not essential for virus viability, but viral growth is affected when this protein is absent. The sequence is that of Structural polyprotein from Oncorhynchus mykiss (Rainbow trout).